We begin with the raw amino-acid sequence, 188 residues long: Segregation and condensation protein B (188 aa).

The protein belongs to the ScpB family. Homodimer. Homodimerization may be required to stabilize the binding of ScpA to the Smc head domains. Component of a cohesin-like complex composed of ScpA, ScpB and the Smc homodimer, in which ScpA and ScpB bind to the head domain of Smc. The presence of the three proteins is required for the association of the complex with DNA.

It localises to the cytoplasm. Its function is as follows. Participates in chromosomal partition during cell division. May act via the formation of a condensin-like complex containing Smc and ScpA that pull DNA away from mid-cell into both cell halves. The sequence is that of Segregation and condensation protein B from Lactococcus lactis subsp. lactis (strain IL1403) (Streptococcus lactis).